The chain runs to 557 residues: MAALTQNPQFKKLKTWYEQHGSDLNLRRLFEGDRDRFNRFSLNLNTNHGHILVDYSKNLVTETVMQMLVDVAKSRGVEAARERMFTGEKINFTEDRAVLHVALRNRSNAPILVDGKDVMPEVNRVLEKMKSFCQRVRSGEWKGYSGKAITDVINIGIGGSDLGPLMVTEALKPYSSEGPRVWFVSNIDGTHIAKTLATLNPESSLFIIASKTFTTQETITNAETAKEWFLLSAKDPSAVAKHFVALSTNTAKVKEFGIDPQNMFEFWDWVGGRYSLWSAIGLSIALHVGFDNFEQLLSGAHWMDQHFRTTPLEKNAPVLLALLGIWYINCFGCETHAMLPYDQYLHRFAAYFQQGDMESNGKYITKSGTRVNYQTGPIVWGEPGTNGQHAFYQLIHQGTKMIPCDFLIPVQSQHPIRNGLHHKILLANFLAQTEALMRGKSTEEARKELQAAGRSPEDFEKLLPHKVFEGNRPTNSIVFTKLTPFILGALIAMYEHKIFVQGIIWDINSFDQWGVELGKQLAKKIEPELDGSSPVTSHDSSTNGLINFIKQEREARS.

A2 carries the N-acetylalanine modification. The residue at position 12 (K12) is an N6-acetyllysine. S107 carries the post-translational modification Phosphoserine. Residue K142 is modified to N6-acetyllysine. A D-glucose 6-phosphate-binding site is contributed by G159–S160. S185 is modified (phosphoserine; by CK2). S210–T215 serves as a coordination point for D-glucose 6-phosphate. At T250 the chain carries Phosphothreonine. 3 residues coordinate D-glucose 6-phosphate: Q354, E358, and H389. E358 serves as the catalytic Proton donor. H389 is an active-site residue. S455 is modified (phosphoserine). K519 contacts D-glucose 6-phosphate. K519 is a catalytic residue.

It belongs to the GPI family. In terms of assembly, homodimer; in the catalytically active form. Monomer in the secreted form. In terms of processing, phosphorylation at Ser-185 by CK2 has been shown to decrease enzymatic activity and may contribute to secretion by a non-classical secretory pathway. Post-translationally, ISGylated.

Its subcellular location is the cytoplasm. It is found in the secreted. The enzyme catalyses alpha-D-glucose 6-phosphate = beta-D-fructose 6-phosphate. Its pathway is carbohydrate degradation; glycolysis; D-glyceraldehyde 3-phosphate and glycerone phosphate from D-glucose: step 2/4. Functionally, in the cytoplasm, catalyzes the conversion of glucose-6-phosphate to fructose-6-phosphate, the second step in glycolysis, and the reverse reaction during gluconeogenesis. Besides it's role as a glycolytic enzyme, also acts as a secreted cytokine: acts as an angiogenic factor (AMF) that stimulates endothelial cell motility. Acts as a neurotrophic factor, neuroleukin, for spinal and sensory neurons. It is secreted by lectin-stimulated T-cells and induces immunoglobulin secretion. The protein is Glucose-6-phosphate isomerase of Bos taurus (Bovine).